A 95-amino-acid polypeptide reads, in one-letter code: Alpha-bungarotoxin, isoform A31 (95 aa).

An N-terminal signal peptide occupies residues 1 to 21 (MKTLLLTLVVVTIVCLDLGYT). 5 cysteine pairs are disulfide-bonded: Cys-24–Cys-44, Cys-37–Cys-65, Cys-50–Cys-54, Cys-69–Cys-80, and Cys-81–Cys-86.

This sequence belongs to the three-finger toxin family. Long-chain subfamily. Type II alpha-neurotoxin sub-subfamily. Monomer in solution, homodimer in crystal state. In terms of tissue distribution, expressed by the venom gland.

It is found in the secreted. Functionally, binds with high affinity to muscular (tested on Torpedo marmorata, Kd=0.4 nM) and neuronal (tested on chimeric alpha-7/CHRNA7, Kd=0.95 nM) nicotinic acetylcholine receptor (nAChR) and inhibits acetylcholine from binding to the receptor, thereby impairing neuromuscular and neuronal transmission. It also shows an activity on GABA(A) receptors. It antagonises GABA-activated currents with high potency when tested on primary hippocampal neurons. It inhibits recombinantly expressed GABA(A) receptors composed of alpha-2-beta-2-gamma-2 (GABRA2-GABRB2-GABRG2) subunits with high potency (62.3% inhibition at 20 uM of toxin). It also shows a weaker inhibition on GABA(A) receptors composed of alpha-1-beta-2-gamma-2 (GABRA1-GABRB2-GABRG2) subunits, alpha-4-beta-2-gamma-2 (GABRA4-GABRB2-GABRG2) subunits, and alpha-5-beta-2-gamma-2 (GABRA5-GABRB2-GABRG2) subunits. A very weak inhibition is also observed on GABA(A) receptor composed of alpha-1-beta-3-gamma-2 (GABRA1-GABRB3-GABRG2). It has also been shown to bind and inhibit recombinant GABA(A) receptor beta-3/GABRB3 subunit (Kd=about 50 nM). In addition, it blocks the extracellular increase of dopamine evoked by nicotine only at the higher dose (4.2 uM). In vivo, when intraperitoneally injected into mice, induces flaccid paralysis of the limbs and respiratory distress, and causes death in a dose-dependent manner. The chain is Alpha-bungarotoxin, isoform A31 from Bungarus candidus (Malayan krait).